The following is a 780-amino-acid chain: Cullin-5 (780 aa).

Serine 34 carries the post-translational modification Phosphoserine. Position 210 is a phosphothreonine (threonine 210). In terms of domain architecture, Cullin neddylation spans 713-772 (LRTRKLYIQIMKMRKKISNAQLQTELVEILKNMFLPQKKMIKEQIEWLIEHKYIRRDESD). A Glycyl lysine isopeptide (Lys-Gly) (interchain with G-Cter in NEDD8) cross-link involves residue lysine 724.

Belongs to the cullin family. In terms of assembly, component of multiple cullin-5-RING E3 ubiquitin-protein ligase complexes (ECS complexes, also named CRL5 complexes) formed of CUL5, Elongin BC (ELOB and ELOC), RNF7/RBX2 and a variable SOCS box domain-containing protein as substrate-specific recognition component. CUL5-containing ECS complexes specifically contain RNF7/RBX2, and not RBX1, as catalytic subunit. Component of the ECS(ASB2) complex with the substrate recognition component ASB2. Component of the ECS(ASB6) complex with the substrate recognition component ASB6. Component of the ECS(ASB7) complex with the substrate recognition component ASB7. Component of the ECS(ASB9) complex with the substrate recognition component ASB9. Component of the ECS(ASB11) complex with the substrate recognition component ASB11. Component of the ECS(ASB12) complex with the substrate recognition component ASB12. Component of the ECS(LRRC41) complex with the substrate recognition component LRRC41. Component of the ECS(SOCS1) complex with the substrate recognition component SOCS1. Component of the ECS(SOCS2) complex with the substrate recognition component SOCS2. Component of the ECS(WSB1) complex with the substrate recognition subunit WSB1. Component of the ECS(SOCS3) complex with the substrate recognition component SOCS3. Component of the ECS(SOCS7) complex with the substrate recognition component SOCS7. Component of the ECS(SPSB1) complex with the substrate recognition component SPSB1. Component of the ECS(SPSB3) complex with the substrate recognition component SPSB3. Component of the ECS(SPSB2) complex with the substrate recognition component SPSB2. Component of the ECS(SPSB4) complex with the substrate recognition component SPSB4. Component of the ECS(RAB40) complex with the substrate recognition subunit RAB40A, RAB40B or RAB40C. Component of the ECS(KLHDC1) complex with the substrate recognition component KLHDC1. Component of the ECS(PCMTD1) complex with the substrate recognition subunit PCMTD1. May also form complexes containing RBX1 and ELOA or VHL; additional evidence is however required to confirm this result in vivo. Interacts (when neddylated) with ARIH2; leading to activate the E3 ligase activity of ARIH2. Interacts with ERCC6; the interaction is induced by DNA damaging agents or inhibitors of RNA polymerase II elongation. Interacts with ELOA (via the BC-box). Interacts (unneddylated form) with DCUN1D1, DCUN1D2, DCUN1D3, DCUN1D4 and DCUN1D5; these interactions promote the cullin neddylation. In terms of processing, neddylated; which enhances the ubiquitination activity of ECS complexes and prevents binding of the inhibitor CAND1. Deneddylated via its interaction with the COP9 signalosome (CSN). Kidney collecting tubules.

It is found in the nucleus. It participates in protein modification; protein ubiquitination. Core component of multiple cullin-5-RING E3 ubiquitin-protein ligase complexes (ECS complexes, also named CRL5 complexes), which mediate the ubiquitination and subsequent proteasomal degradation of target proteins. Acts a scaffold protein that contributes to catalysis through positioning of the substrate and the ubiquitin-conjugating enzyme. The functional specificity of the E3 ubiquitin-protein ligase complex depends on the variable SOCS box-containing substrate recognition component. Acts as a key regulator of neuron positioning during cortex development: component of various SOCS-containing ECS complexes, such as the ECS(SOCS7) complex, that regulate reelin signaling by mediating ubiquitination and degradation of DAB1. ECS(SOCS1) seems to direct ubiquitination of JAK2. The ECS(SOCS2) complex mediates the ubiquitination and subsequent proteasomal degradation of phosphorylated EPOR and GHR. The ECS(SPSB3) complex catalyzes ubiquitination of nuclear CGAS. ECS(KLHDC1) complex is part of the DesCEND (destruction via C-end degrons) pathway and mediates ubiquitination and degradation of truncated SELENOS selenoprotein produced by failed UGA/Sec decoding, which ends with a glycine. The ECS(ASB9) complex mediates ubiquitination and degradation of CKB. As part of some ECS complex, promotes 'Lys-11'-linked ubiquitination and degradation of BTRC. As part of a multisubunit ECS complex, polyubiquitinates monoubiquitinated POLR2A. As part of the ECS(RAB40C) complex, mediates ANKRD28 ubiquitination and degradation, thereby regulating protein phosphatase 6 (PP6) complex activity and focal adhesion assembly during cell migration. As part of the ECS(RAB40A) complex, mediates RHOU 'Lys-48'-linked ubiquitination and degradation, thus inhibiting focal adhesion disassembly during cell migration. As part of the ECS(RAB40B) complex, mediates LIMA1/EPLIN and RAP2 ubiquitination, thereby regulating actin cytoskeleton dynamics and stress fiber formation during cell migration. May form a cell surface vasopressin receptor. The protein is Cullin-5 (CUL5) of Oryctolagus cuniculus (Rabbit).